The chain runs to 1164 residues: DNA-directed RNA polymerase 133 kDa polypeptide (1164 aa).

This sequence belongs to the RNA polymerase beta chain family. The DNA-dependent RNA polymerase used for intermediate and late genes expression consists of eight subunits 147 kDa, 133 kDa, 35 kDa, 30 kDa, 22 kDa, 19 kDa, 18 kDa and 7 kDa totalling more than 500 kDa in mass. The same holoenzyme, with the addition of the transcription-specificity factor RAP94, is used for early gene expression.

The protein resides in the virion. It catalyses the reaction RNA(n) + a ribonucleoside 5'-triphosphate = RNA(n+1) + diphosphate. In terms of biological role, part of the DNA-dependent RNA polymerase which catalyzes the transcription of viral DNA into RNA using the four ribonucleoside triphosphates as substrates. Responsible for the transcription of early, intermediate and late genes. DNA-dependent RNA polymerase associates with the early transcription factor (ETF), itself composed of OPG118 and OPG133, thereby allowing the early genes transcription. Late transcription, and probably also intermediate transcription, require newly synthesized RNA polymerase. The polypeptide is DNA-directed RNA polymerase 133 kDa polypeptide (OPG151) (Homo sapiens (Human)).